Consider the following 269-residue polypeptide: MESLNILISNDDGVFAEGIRALARSALKKGHKVTVVCPDQERSATGHGLTLQSPLRVERADELFEPGIKAWGCSGTPADCVKLALSELLDKKPDLILSGVNHGPNLGTDIFCSGTVAAAMEGTLENVPSMAISVASFKWKNFEFASEIAMNIAEQAIKDNWPNALLLNLNIPPCEKNKIKELSWTRLSIRKYKNQFSKREDPRGDDYYWLAGEAVLDLKSKGYGPKNWPSDVSQIEENKISLTPVETDLFWRGSLDVLPKINASFINAS.

The a divalent metal cation site is built by D11, D12, S43, and N101.

It belongs to the SurE nucleotidase family. It depends on a divalent metal cation as a cofactor.

It is found in the cytoplasm. It carries out the reaction a ribonucleoside 5'-phosphate + H2O = a ribonucleoside + phosphate. In terms of biological role, nucleotidase that shows phosphatase activity on nucleoside 5'-monophosphates. In Prochlorococcus marinus (strain MIT 9515), this protein is 5'-nucleotidase SurE.